Consider the following 970-residue polypeptide: UvrABC system protein A (970 aa).

34–41 (GVSGSGKS) is a binding site for ATP. Residues 284 to 311 (CPEHGAVMDELSPRLFSFNSPYGACPDC) form a C4-type zinc finger. 2 consecutive ABC transporter domains span residues 340–617 (WSEK…QRSL) and 637–965 (GNGA…KYLA). Residue 669–676 (GVSGSGKS) participates in ATP binding. The C4-type zinc finger occupies 768-794 (CEACAGQGVNVIEMNFLPDVYVQCDVC).

It belongs to the ABC transporter superfamily. UvrA family. As to quaternary structure, forms a heterotetramer with UvrB during the search for lesions.

The protein localises to the cytoplasm. Its function is as follows. The UvrABC repair system catalyzes the recognition and processing of DNA lesions. UvrA is an ATPase and a DNA-binding protein. A damage recognition complex composed of 2 UvrA and 2 UvrB subunits scans DNA for abnormalities. When the presence of a lesion has been verified by UvrB, the UvrA molecules dissociate. The chain is UvrABC system protein A from Synechocystis sp. (strain ATCC 27184 / PCC 6803 / Kazusa).